Consider the following 204-residue polypeptide: Tetraspanin-13 (204 aa).

Residues 1–19 (MVCGGFACSKNCLCALNLL) are Cytoplasmic-facing. Residues 20–40 (YTLVSLLLIGIAAWGIGFGLI) traverse the membrane as a helical segment. Residues 41 to 44 (SSLR) lie on the Extracellular side of the membrane. A helical membrane pass occupies residues 45–65 (VVGVVIAVGIFLFLIALVGLI). Residues 66-72 (GAVKHHQ) are Cytoplasmic-facing. A helical transmembrane segment spans residues 73–93 (VLLFFYMIILLLVFIVQFSVS). The Extracellular portion of the chain corresponds to 94–167 (CACLALNQEQ…IGRYAGEVLR (74 aa)). 2 N-linked (GlcNAc...) asparagine glycosylation sites follow: asparagine 113 and asparagine 137. Serine 143 carries the post-translational modification Phosphoserine. Residues 168–188 (FVGGIGLFFSFTEILGVWLTY) form a helical membrane-spanning segment. Topologically, residues 189–204 (RYRNQKDPRANPSAFL) are cytoplasmic.

The protein belongs to the tetraspanin (TM4SF) family.

The protein resides in the membrane. This is Tetraspanin-13 (TSPAN13) from Bos taurus (Bovine).